The sequence spans 345 residues: MSRQAKDDFLRHYTVSDPRTHPKGYTEYKVTAQFISKRDPEDVKEVVVWKRYSDFRKLHGDLAYTHRNLFRRLEEFPAFPRGQVFGRFEASVIEERRKGAEDLLRFTVHIPALNNSPQLKEFFRGGEVTRPSEVSGDLHILPPPLIPTPPPDEPRVQPHETWLPQPLPAERRGLEELEVPADPPPSSPAQEALDLLFNCGSTEEASSSPARGPLTEAELALFDPFSKEEGAGPSPTHIGELAALEAGSGRPDQEPWEPGGQAEEDDEEGEPAPAYLSQATELITQALRDEKAGAYPAALQGYRDGVHILLQGVPGDPSPARREGVKKKAAEYLKRAEEILHLHLS.

Positions 1–130 (MSRQAKDDFL…EFFRGGEVTR (130 aa)) constitute a PX domain. Arg-105 carries the omega-N-methylarginine modification. The segment at 133–163 (EVSGDLHILPPPLIPTPPPDEPRVQPHETWL) is disordered. The span at 141 to 151 (LPPPLIPTPPP) shows a compositional bias: pro residues. Phosphoserine is present on residues Ser-208 and Ser-234. The tract at residues 226-274 (SKEEGAGPSPTHIGELAALEAGSGRPDQEPWEPGGQAEEDDEEGEPAPA) is disordered. The region spanning 272-345 (APAYLSQATE…AEEILHLHLS (74 aa)) is the MIT domain.

Belongs to the sorting nexin family.

In terms of biological role, may be involved in several stages of intracellular trafficking. Overexpression of SNX15 disrupts the normal trafficking of proteins from the plasma membrane to recycling endosomes or the TGN. This is Sorting nexin-15 (SNX15) from Bos taurus (Bovine).